Consider the following 300-residue polypeptide: Porphobilinogen deaminase (300 aa).

Residue Cys239 is modified to S-(dipyrrolylmethanemethyl)cysteine.

This sequence belongs to the HMBS family. As to quaternary structure, monomer. The cofactor is dipyrromethane.

The catalysed reaction is 4 porphobilinogen + H2O = hydroxymethylbilane + 4 NH4(+). It functions in the pathway porphyrin-containing compound metabolism; protoporphyrin-IX biosynthesis; coproporphyrinogen-III from 5-aminolevulinate: step 2/4. In terms of biological role, tetrapolymerization of the monopyrrole PBG into the hydroxymethylbilane pre-uroporphyrinogen in several discrete steps. The sequence is that of Porphobilinogen deaminase from Francisella tularensis subsp. tularensis (strain WY96-3418).